The following is a 128-amino-acid chain: MISSANNKGAGTSRRKLRSEKAALQFSVSRVEYSLKKGRYCRRLGATAPVYLAAVLENLVAEVLEMAANVTEKHKRIVIKPRHIMLAVRNDVEVNKLFHGVTISASGVVPKTRKELDRRKRRSTSQAD.

This sequence belongs to the histone H2A family. As to quaternary structure, the nucleosome is a histone octamer containing two molecules each of H2A, H2B, H3 and H4 assembled in one H3-H4 heterotetramer and two H2A-H2B heterodimers. The octamer wraps approximately 147 bp of DNA. Expressed in the generative cell within the bicellular pollen. Not detected in other reproductive or vegetative tissues.

It is found in the nucleus. It localises to the chromosome. In terms of biological role, core component of nucleosome. Nucleosomes wrap and compact DNA into chromatin, limiting DNA accessibility to the cellular machineries which require DNA as a template. Histones thereby play a central role in transcription regulation, DNA repair, DNA replication and chromosomal stability. DNA accessibility is regulated via a complex set of post-translational modifications of histones, also called histone code, and nucleosome remodeling. May be involved in the repression of gene expression in male gametes. The polypeptide is Histone H2A.2 (gH2A) (Lilium longiflorum (Trumpet lily)).